Consider the following 328-residue polypeptide: Glycerol-3-phosphate dehydrogenase [NAD(P)+] (328 aa).

Trp15, Arg35, and Lys108 together coordinate NADPH. Sn-glycerol 3-phosphate-binding residues include Lys108, Gly136, and Ser138. An NADPH-binding site is contributed by Ala140. Residues Lys191, Asp244, Ser254, Arg255, and Asn256 each contribute to the sn-glycerol 3-phosphate site. Lys191 serves as the catalytic Proton acceptor. Arg255 provides a ligand contact to NADPH. NADPH is bound by residues Leu275 and Glu277.

It belongs to the NAD-dependent glycerol-3-phosphate dehydrogenase family.

The protein localises to the cytoplasm. The enzyme catalyses sn-glycerol 3-phosphate + NAD(+) = dihydroxyacetone phosphate + NADH + H(+). It catalyses the reaction sn-glycerol 3-phosphate + NADP(+) = dihydroxyacetone phosphate + NADPH + H(+). It functions in the pathway membrane lipid metabolism; glycerophospholipid metabolism. Its function is as follows. Catalyzes the reduction of the glycolytic intermediate dihydroxyacetone phosphate (DHAP) to sn-glycerol 3-phosphate (G3P), the key precursor for phospholipid synthesis. This chain is Glycerol-3-phosphate dehydrogenase [NAD(P)+], found in Azorhizobium caulinodans (strain ATCC 43989 / DSM 5975 / JCM 20966 / LMG 6465 / NBRC 14845 / NCIMB 13405 / ORS 571).